The chain runs to 565 residues: NAD-dependent malic enzyme (565 aa).

The active-site Proton donor is Tyr104. An NAD(+)-binding site is contributed by Arg157. Lys175 (proton acceptor) is an active-site residue. Glu246, Asp247, and Asp270 together coordinate a divalent metal cation. NAD(+) is bound by residues Asp270 and Asn418.

The protein belongs to the malic enzymes family. In terms of assembly, homotetramer. Mg(2+) is required as a cofactor. The cofactor is Mn(2+).

It carries out the reaction (S)-malate + NAD(+) = pyruvate + CO2 + NADH. The enzyme catalyses oxaloacetate + H(+) = pyruvate + CO2. The sequence is that of NAD-dependent malic enzyme from Escherichia coli O157:H7.